The primary structure comprises 203 residues: MARFRGSITKVSRRLGIALTPKAEKYMERRPFAPGQHGQGRRSKVSEYALQLREKQKMKYLYGILEKQFRNYYKKAVSQRGVTGDNLVRLIERRFDNVVFRAGFAPSRAGSRQLVSHGHLLVNGKKVNIPSYMVSPGDLIEFRPKSKNMSAVSDALSKTPDARIPSWIQVDKANQKAVFLAVPERVEVQEPFNEQLVVELYSK.

One can recognise an S4 RNA-binding domain in the interval 93-153; the sequence is RRFDNVVFRA…PKSKNMSAVS (61 aa).

It belongs to the universal ribosomal protein uS4 family. In terms of assembly, part of the 30S ribosomal subunit. Contacts protein S5. The interaction surface between S4 and S5 is involved in control of translational fidelity.

Functionally, one of the primary rRNA binding proteins, it binds directly to 16S rRNA where it nucleates assembly of the body of the 30S subunit. With S5 and S12 plays an important role in translational accuracy. The polypeptide is Small ribosomal subunit protein uS4 (Chlorobium phaeovibrioides (strain DSM 265 / 1930) (Prosthecochloris vibrioformis (strain DSM 265))).